The sequence spans 250 residues: Aquaporin (250 aa).

Residues 1–15 (MTRETLKTLQSTFGE) lie on the Cytoplasmic side of the membrane. The helical transmembrane segment at 16–36 (MVASFVFGFAVYSALLGSALT) threads the bilayer. Topologically, residues 37–42 (EQSAAR) are extracellular. A helical transmembrane segment spans residues 43–63 (VIVGLTVGFSGICVIYSFCDV). Topologically, residues 64 to 86 (TVAHFNPAITLAAILTCKLGVLR) are cytoplasmic. The NPA signature appears at 69–71 (NPA). Residues 87 to 107 (GIGYIVAQYIGFILAVCALLP) traverse the membrane as a helical segment. Residues 108 to 133 (CSPVGYKETLNIIRPTPSPFGGDNLN) are Extracellular-facing. Residues 134-154 (VFFTEFFLTAILVHVAFATAV) form a helical membrane-spanning segment. Topologically, residues 155-179 (NPYKPKTDTEGKFVDPDEEEPVDRR) are cytoplasmic. The helical transmembrane segment at 180–200 (ITAPLCIGLTLGFLAFLGLAS) threads the bilayer. Over 201–224 (SGGAFNPGLTLAPVIMSNTWNHFW) the chain is Extracellular. The short motif at 206 to 208 (NPG) is the NPG element. Residues 225–245 (AYFAGQYLGGFVGGLLQVLVL) form a helical membrane-spanning segment. Residues 246–250 (YKLSF) are Cytoplasmic-facing.

Belongs to the MIP/aquaporin (TC 1.A.8) family.

The protein localises to the cell membrane. Functionally, water channel required to facilitate the transport of water across membranes. Involved in osmotolerance. The polypeptide is Aquaporin (AQP) (Encephalitozoon cuniculi (strain GB-M1) (Microsporidian parasite)).